We begin with the raw amino-acid sequence, 505 residues long: Glycerol kinase (505 aa).

An ADP-binding site is contributed by Thr12. Thr12, Thr13, and Ser14 together coordinate ATP. Thr12 is a sn-glycerol 3-phosphate binding site. Arg16 is an ADP binding site. Arg82, Glu83, Tyr134, and Asp246 together coordinate sn-glycerol 3-phosphate. The glycerol site is built by Arg82, Glu83, Tyr134, Asp246, and Gln247. 2 residues coordinate ADP: Thr268 and Gly312. 4 residues coordinate ATP: Thr268, Gly312, Gln316, and Gly413. ADP-binding residues include Gly413 and Asn417.

This sequence belongs to the FGGY kinase family.

The catalysed reaction is glycerol + ATP = sn-glycerol 3-phosphate + ADP + H(+). The protein operates within polyol metabolism; glycerol degradation via glycerol kinase pathway; sn-glycerol 3-phosphate from glycerol: step 1/1. Inhibited by fructose 1,6-bisphosphate (FBP). Key enzyme in the regulation of glycerol uptake and metabolism. Catalyzes the phosphorylation of glycerol to yield sn-glycerol 3-phosphate. This Beutenbergia cavernae (strain ATCC BAA-8 / DSM 12333 / CCUG 43141 / JCM 11478 / NBRC 16432 / NCIMB 13614 / HKI 0122) protein is Glycerol kinase.